Here is a 986-residue protein sequence, read N- to C-terminus: Regulator of telomere elongation helicase 1 homolog (986 aa).

The Helicase ATP-binding domain occupies 7–326 (AGIPVHFPFE…KEMLLELEKA (320 aa)). 42-49 (SPTGTGKT) contacts ATP. Residues Cys-148, Cys-166, Cys-175, and Cys-211 each contribute to the [4Fe-4S] cluster site. A DEAH box motif is present at residues 254 to 257 (DEGH). At Thr-875 the chain carries Phosphothreonine.

This sequence belongs to the helicase family. RAD3/XPD subfamily.

The protein localises to the nucleus. The enzyme catalyses ATP + H2O = ADP + phosphate + H(+). Its function is as follows. A probable ATP-dependent DNA helicase implicated in DNA repair and the maintenance of genomic stability. Acts as an anti-recombinase to counteract toxic recombination and limit crossover during meiosis. Regulates meiotic recombination and crossover homeostasis by physically dissociating strand invasion events and thereby promotes noncrossover repair by meiotic synthesis dependent strand annealing (SDSA) as well as disassembly of D loop recombination intermediates. This chain is Regulator of telomere elongation helicase 1 homolog, found in Drosophila grimshawi (Hawaiian fruit fly).